A 621-amino-acid chain; its full sequence is 5-aminolevulinate synthase, mitochondrial (621 aa).

The tract at residues D76–T95 is disordered. R122 and S234 together coordinate substrate. Pyridoxal 5'-phosphate-binding residues include S286, H314, and T359. K362 is a catalytic residue. The residue at position 362 (K362) is an N6-(pyridoxal phosphate)lysine. T391 and T392 together coordinate pyridoxal 5'-phosphate. T477 contacts substrate.

It belongs to the class-II pyridoxal-phosphate-dependent aminotransferase family. As to quaternary structure, homodimer. Pyridoxal 5'-phosphate serves as cofactor.

The protein resides in the mitochondrion matrix. The catalysed reaction is succinyl-CoA + glycine + H(+) = 5-aminolevulinate + CO2 + CoA. It functions in the pathway porphyrin-containing compound metabolism; protoporphyrin-IX biosynthesis; 5-aminolevulinate from glycine: step 1/1. Catalyzes the synthesis of 5-aminolevulinate (ALA) from succinyl-CoA and glycine, the first and rate-limiting step in heme biosynthesis. This chain is 5-aminolevulinate synthase, mitochondrial (hem1), found in Agaricus bisporus (White button mushroom).